Here is a 316-residue protein sequence, read N- to C-terminus: MTRRLKAAIIGSGNIGTDLMIKILRHGKHIDMAAMVGIDPKSDGLARAARLGVATTYEGVAGLIRLPVFADIDFVFDATSAGAHVENDALLRAAKPGIRLVDLTPAAIGPYCIPVVNGDAHLDALNVNMVTCGGQATIPMVAAVSRVARVHYAEIVASIASKSAGPGTRANIDEFTETTAKAIEAVGGATKGKAIIVMNPAEPPLIMRDTVYTLSQPADEEAIAESVERMVAAVQAYVPGYRLKQKVQFDRIDSPLRIPGVGDALKGLKTSIFLEVEGAAHYLPAYAGNLDIMTSAALRTAEHMAQRMLADATVSA.

12 to 15 (SGNI) contributes to the NAD(+) binding site. The active-site Acyl-thioester intermediate is C132. NAD(+) is bound by residues 163–171 (SAGPGTRAN) and N289.

The protein belongs to the acetaldehyde dehydrogenase family.

It catalyses the reaction acetaldehyde + NAD(+) + CoA = acetyl-CoA + NADH + H(+). The polypeptide is Acetaldehyde dehydrogenase (bphG) (Bordetella avium (strain 197N)).